The chain runs to 261 residues: Beta cell expansion factor A (261 aa).

A signal peptide spans 1-21 (MNKRNWLLALSLSLAFSPCYA). The SYLF domain stretch occupies residues 99–261 (KTAKEARIAI…IDKDLTETSR (163 aa)).

It is found in the secreted. The protein resides in the host. Stimulates the proliferation of insulin-producing beta cells during development in gnotobiotic zebrafish and mice. BefA is a microbiome-derived protein that traffics from the host intestinal lumen to the pancreas to act directly on pancreatic islets. In pancreas, interacts directly with host beta cells and elicits their proliferation via a mechanism of increasing membrane permeabilization. Can also permeabilize bacterial cell membranes, but does not show killing of target bacteria. In Aeromonas veronii, this protein is Beta cell expansion factor A.